The primary structure comprises 909 residues: MTDVVSDFDHVYNIIRNNYNLNYYLNCADRSNNVCTIKYLQERKSYFCCAVDESTGRCVLHRCVLIVFGTWLDKKFRKKEFSGGDATCGGGGGDGDQDQDAIDERSNIKGTFMIDGRFLSFPNVMMNNNILMHNFYDKLYSKNCKRMFLYGNVDEEKRINRAIQLVYDDHEDVLFARDVYAKDYVVSENLNETLETYLRSSGKWEPLNFLFDFDKNQTDKMFDRIKMIMRAEINYSIDSLSNKIIYKHAYLTHLLYRPVLKMYQASKIDSAAAVSESNGSLRKLGGNQSGAMYPKDCKKIVDTIVNGKLIHVISKTFSKQKKNFLNHQDNSSNNNIEMCPPMIKYRVGNEVVRIINDNMRQDMLKQEYDFVKFVDSFFHGEMTVAGKKFFLCRDVRLPNVDYESIAKKFKDLIESNLIVRRDEDENGSGGDDDDDEWLMIAFNNRPTTFSCKRKHLVRIVYEFKRKRFPVEIKLSKSILFVNHHEGMICIRKQVRINEKVNISALLTPYEYHNVESIIGQIGARIVDVDHVSALMSKTLQYYYRSHLHIFATIPVPKLIVSVTNLKNAMPVIEYDDVEWNENRDMFIRNLPVGNSVVASPGSVHNNKMINLWTLVRDSRLMTAEDPYIPNVTLPVKLFNNKVNRLKGKMVYASKSKTPLVKFFKSESNNFVDTNEGHVLAMAGVIVSNVKINWTHDGKRYKIETCKNKSFYIFKIYTFLRKIRSQRIELIDAKLSTLNDFVYVKFSIVTSTNNLDGIKICGIHGQKGVMNSSEDLTEWMAEDGTHAQICLSPVSFLSRQSNFDYIERKYVVRGGDHTDPSAVRYPMFRIPYMLFNNTPEILQRIPQTNYTGHEKIEGTRLDQWSINQSFAGNRWAEGLQCVRGGTNLPDSSGEYKVLTSLLHCNNVIVN.

It belongs to the RNA polymerase beta chain family.

The enzyme catalyses RNA(n) + a ribonucleoside 5'-triphosphate = RNA(n+1) + diphosphate. In terms of biological role, required for late and very late gene expression. May be a component of the novel RNA polymerase activity induced by baculovirus infection. This is Probable DNA-directed RNA polymerase subunit beta (LEF-8) from Lepidoptera (butterflies and moths).